The sequence spans 233 residues: MGCSGSKNASNPKDGAASKGGKDGKTTADRKVAWERIRCAIPRDKDAESKSRRIELFKQFDTNGTGKLGFREVLDGCYSILKLDEFTTHLPDIVQRAFDKAKDLGNKVKGVGEEDLVEFLEFRLMLCYIYDIFELTVIFDTMDKDGSLLLELHEFKEALPKLKEWGVDITDATTVFNEIDTNGSGVVTFDEFSCWAVTKKLQVSGDPDDEENGANEGDGANAGDGVPAAEGSA.

Over residues 1-11 the composition is skewed to polar residues; that stretch reads MGCSGSKNASN. A disordered region spans residues 1 to 29; that stretch reads MGCSGSKNASNPKDGAASKGGKDGKTTAD. Over residues 20 to 29 the composition is skewed to basic and acidic residues; that stretch reads GGKDGKTTAD. EF-hand domains follow at residues 48–83, 130–165, and 167–202; these read ESKS…ILKL, YDIF…LKEW, and VDIT…KKLQ. Ca(2+) is bound by residues Asp-61, Asn-63, Thr-65, Lys-67, Glu-72, Asp-143, Asp-145, Ser-147, Glu-154, Asp-180, Asn-182, Ser-184, and Glu-191. The segment at 203 to 233 is disordered; it reads VSGDPDDEENGANEGDGANAGDGVPAAEGSA. Residues 214 to 225 are compositionally biased toward low complexity; it reads ANEGDGANAGDG.

This sequence belongs to the calflagin family.

The protein resides in the cell projection. The protein localises to the cilium. It is found in the flagellum. Functionally, may contribute to the rapid motility of the trypanosomes, playing a role either in flagellar structure or in calcium metabolism. Could alternate between a GDP-bound inactive form to a calcium/GTP-bound active form. In Trypanosoma brucei brucei, this protein is Flagellar calcium-binding protein TB-17 (FCABP).